Consider the following 396-residue polypeptide: Elongation factor Tu (396 aa).

The tr-type G domain occupies 10–205 (KPHVNIGTIG…AVDESIPDPV (196 aa)). The tract at residues 19–26 (GHVDHGKT) is G1. 19 to 26 (GHVDHGKT) is a binding site for GTP. Thr26 provides a ligand contact to Mg(2+). The segment at 62–66 (GITIN) is G2. The interval 83 to 86 (DAPG) is G3. GTP contacts are provided by residues 83 to 87 (DAPGH) and 138 to 141 (NKAD). The interval 138–141 (NKAD) is G4. The interval 175 to 177 (SAL) is G5.

This sequence belongs to the TRAFAC class translation factor GTPase superfamily. Classic translation factor GTPase family. EF-Tu/EF-1A subfamily. Monomer.

The protein localises to the cytoplasm. It catalyses the reaction GTP + H2O = GDP + phosphate + H(+). Its function is as follows. GTP hydrolase that promotes the GTP-dependent binding of aminoacyl-tRNA to the A-site of ribosomes during protein biosynthesis. The polypeptide is Elongation factor Tu (Mycolicibacterium vanbaalenii (strain DSM 7251 / JCM 13017 / BCRC 16820 / KCTC 9966 / NRRL B-24157 / PYR-1) (Mycobacterium vanbaalenii)).